A 181-amino-acid polypeptide reads, in one-letter code: MKQRGVTVWLTGLSGAGKSTITEALQAKLIAEGYSIEVLDGDIVRTNLTKGLGFSKEDRDENIRRIGFVSNLLTRHGVIVLVSAISPYREIREEVRGKIGNFVEVFVNAPLSVCEDRDVKGLYKRARAGEIKSFTGIDDPYEPPFNPEVECRTDLETLEESVAKVWNKLTELGYIHQAVAV.

Residue 12–19 (GLSGAGKS) coordinates ATP. Ser-86 (phosphoserine intermediate) is an active-site residue.

This sequence belongs to the APS kinase family.

It carries out the reaction adenosine 5'-phosphosulfate + ATP = 3'-phosphoadenylyl sulfate + ADP + H(+). It participates in sulfur metabolism; hydrogen sulfide biosynthesis; sulfite from sulfate: step 2/3. Catalyzes the synthesis of activated sulfate. In Microcystis aeruginosa (strain NIES-843 / IAM M-2473), this protein is Adenylyl-sulfate kinase.